The following is a 334-amino-acid chain: Large ribosomal subunit protein uL3 (334 aa).

A compositionally biased stretch (basic residues) spans 1-10; it reads MGMKKNRPRR. Residues 1 to 21 form a disordered region; it reads MGMKKNRPRRGSLAFSPRKRA.

This sequence belongs to the universal ribosomal protein uL3 family. As to quaternary structure, part of the 50S ribosomal subunit. Forms a cluster with proteins L14 and L24e.

Its function is as follows. One of the primary rRNA binding proteins, it binds directly near the 3'-end of the 23S rRNA, where it nucleates assembly of the 50S subunit. This is Large ribosomal subunit protein uL3 from Methanococcus maripaludis (strain C5 / ATCC BAA-1333).